The chain runs to 425 residues: Cyanogenic beta-glucosidase (425 aa).

Positions 1-11 are cleaved as a signal peptide; that stretch reads LLSITTTHIHA. Residues Gln-44, His-148, and 193 to 194 contribute to the a beta-D-glucoside site; that span reads NE. Glu-194 acts as the Proton donor in catalysis. Cys-213 and Cys-221 are oxidised to a cystine. Asn-220 carries an N-linked (GlcNAc...) asparagine glycan. Positions 337 and 408 each coordinate a beta-D-glucoside. Glu-408 functions as the Nucleophile in the catalytic mechanism. N-linked (GlcNAc...) asparagine glycosylation is present at Asn-412.

It belongs to the glycosyl hydrolase 1 family. In terms of assembly, homodimer. Leaves.

The enzyme catalyses Hydrolysis of terminal, non-reducing beta-D-glucosyl residues with release of beta-D-glucose.. In terms of biological role, hydrolyzes cyanoglucosides, contributing to the release of hydrocyanic acid, which functions as a defense mechanism against small predators, when the leaf tissue is damaged. This Trifolium repens (Creeping white clover) protein is Cyanogenic beta-glucosidase (LI).